A 349-amino-acid polypeptide reads, in one-letter code: Phosphoribosylformylglycinamidine cyclo-ligase (349 aa).

This sequence belongs to the AIR synthase family.

Its subcellular location is the cytoplasm. It catalyses the reaction 2-formamido-N(1)-(5-O-phospho-beta-D-ribosyl)acetamidine + ATP = 5-amino-1-(5-phospho-beta-D-ribosyl)imidazole + ADP + phosphate + H(+). Its pathway is purine metabolism; IMP biosynthesis via de novo pathway; 5-amino-1-(5-phospho-D-ribosyl)imidazole from N(2)-formyl-N(1)-(5-phospho-D-ribosyl)glycinamide: step 2/2. The chain is Phosphoribosylformylglycinamidine cyclo-ligase from Methanococcus vannielii (strain ATCC 35089 / DSM 1224 / JCM 13029 / OCM 148 / SB).